The following is a 1416-amino-acid chain: DNA-directed RNA polymerase subunit beta' (1416 aa).

4 residues coordinate Zn(2+): C68, C70, C83, and C86. Mg(2+) is bound by residues D458, D460, and D462. Positions 811, 884, 891, and 894 each coordinate Zn(2+).

The protein belongs to the RNA polymerase beta' chain family. In terms of assembly, the RNAP catalytic core consists of 2 alpha, 1 beta, 1 beta' and 1 omega subunit. When a sigma factor is associated with the core the holoenzyme is formed, which can initiate transcription. Mg(2+) is required as a cofactor. The cofactor is Zn(2+).

It catalyses the reaction RNA(n) + a ribonucleoside 5'-triphosphate = RNA(n+1) + diphosphate. In terms of biological role, DNA-dependent RNA polymerase catalyzes the transcription of DNA into RNA using the four ribonucleoside triphosphates as substrates. This is DNA-directed RNA polymerase subunit beta' from Francisella philomiragia subsp. philomiragia (strain ATCC 25017 / CCUG 19701 / FSC 153 / O#319-036).